We begin with the raw amino-acid sequence, 477 residues long: Homospermidine synthase (477 aa).

This sequence belongs to the saccharopine dehydrogenase family. Homodimer. NAD(+) serves as cofactor.

It carries out the reaction 2 putrescine = sym-homospermidine + NH4(+). The enzyme catalyses putrescine + spermidine = sym-homospermidine + propane-1,3-diamine. Functionally, involved in the NAD(+)-dependent synthesis of the polyamine homospermidine from putrescine. The sequence is that of Homospermidine synthase (hss) from Blastochloris viridis (Rhodopseudomonas viridis).